A 261-amino-acid chain; its full sequence is Carbonic anhydrase 1 (261 aa).

At Ala2 the chain carries N-acetylalanine. Residues Pro4–Phe261 enclose the Alpha-carbonic anhydrase domain. The Proton donor/acceptor role is filled by His65. His95, His97, and His120 together coordinate Zn(2+). Substrate is bound by residues Thr200 and Thr200–His201. Positions Glu235–Phe261 are disordered. Polar residues predominate over residues Val240–Thr249.

This sequence belongs to the alpha-carbonic anhydrase family. Zn(2+) is required as a cofactor.

It is found in the cytoplasm. The enzyme catalyses hydrogencarbonate + H(+) = CO2 + H2O. It carries out the reaction urea = cyanamide + H2O. Its activity is regulated as follows. Inhibited by acetazolamide. Its function is as follows. Catalyzes the reversible hydration of carbon dioxide. Can hydrate cyanamide to urea. The chain is Carbonic anhydrase 1 (CA1) from Macaca nemestrina (Pig-tailed macaque).